We begin with the raw amino-acid sequence, 554 residues long: Formate--tetrahydrofolate ligase (554 aa).

67–74 contributes to the ATP binding site; sequence TPTGEGKT.

This sequence belongs to the formate--tetrahydrofolate ligase family.

It catalyses the reaction (6S)-5,6,7,8-tetrahydrofolate + formate + ATP = (6R)-10-formyltetrahydrofolate + ADP + phosphate. The protein operates within one-carbon metabolism; tetrahydrofolate interconversion. The chain is Formate--tetrahydrofolate ligase from Finegoldia magna (strain ATCC 29328 / DSM 20472 / WAL 2508) (Peptostreptococcus magnus).